Reading from the N-terminus, the 161-residue chain is RNA pyrophosphohydrolase (161 aa).

Positions 12 to 154 (PYRPGVGMMI…KRKLYQAVVK (143 aa)) constitute a Nudix hydrolase domain. The Nudix box motif lies at 46–67 (GGIVPGETPSIAAMREMLEEIG).

This sequence belongs to the Nudix hydrolase family. RppH subfamily. A divalent metal cation serves as cofactor.

In terms of biological role, accelerates the degradation of transcripts by removing pyrophosphate from the 5'-end of triphosphorylated RNA, leading to a more labile monophosphorylated state that can stimulate subsequent ribonuclease cleavage. The sequence is that of RNA pyrophosphohydrolase from Rickettsia peacockii (strain Rustic).